The following is a 472-amino-acid chain: uncharacterized protein (472 aa).

The protein resides in the mitochondrion. This is an uncharacterized protein from Saccharomyces cerevisiae (strain ATCC 204508 / S288c) (Baker's yeast).